A 189-amino-acid chain; its full sequence is MSKLLKLVIVGDGGVGKSALTIQLTQNQFIAEYDPTIENSYRKQVNIDEEVYMLDILDTAGQEEYSAMRDQYIRSGRGFLIVYSIISRASFEAVTTFREQILRVKDLSTYPIVIIGNKADLPDKDRKVPPMEGKELAKSFGAPFLETSAKSRVNVEEAFFTLVREIKRWNQNPQNEEMLPPKKRGCIIL.

Glycine 11–serine 18 is a GTP binding site. Residues tyrosine 33–tyrosine 41 carry the Effector region motif. GTP is bound by residues aspartate 58 to glutamine 62 and asparagine 117 to aspartate 120. At cysteine 186 the chain carries Cysteine methyl ester. Cysteine 186 is lipidated: S-geranylgeranyl cysteine. Residues isoleucine 187–leucine 189 constitute a propeptide, removed in mature form.

It belongs to the small GTPase superfamily. Ras family.

It localises to the cell membrane. The catalysed reaction is GTP + H2O = GDP + phosphate + H(+). Its activity is regulated as follows. Alternates between an inactive form bound to GDP and an active form bound to GTP. Activated by a guanine nucleotide-exchange factor (GEF) and inactivated by a GTPase-activating protein (GAP). Its function is as follows. Ras proteins bind GDP/GTP and possess intrinsic GTPase activity. In Dictyostelium discoideum (Social amoeba), this protein is Ras-like protein rasC (rasC).